Here is a 341-residue protein sequence, read N- to C-terminus: MVVVAVAGGTGGVGRTVLDAIAKSGQHQAIVLSRTTSVPTAVDEPKRFAVDYNSVEQMKKILQENNVQVVVSALLLVDEAVAQSQINLIRAAAQSGTVTKFIPSEYYIDFHAPIPYVSLQSILSRQRFSLFSTSGADLFTNFQLEAEAELSRHAQLTWTLIRVGIFLDHLTMPHNPKTTYITPFWVFVDIDHEQCVFPGDGSQPLVLTHSQDLAAYIERLVGLPAENWPRESVVASNKLLVKDLESLVNKVTGKKFKVAYDSVECIHKGRITQLPSNTAVFQDPAKGEMFRDVEHQVMLSMLSRAHDLPGKNLAELFPEVETTDIEDFFRSGWTLKQSRAP.

Belongs to the NmrA-type oxidoreductase family. Isoflavone reductase subfamily.

It functions in the pathway mycotoxin biosynthesis. Oxidoreductase; part of the gene cluster that mediates the biosynthesis of swainsonine (SW), a cytotoxic fungal alkaloid and a potential cancer therapy drug. Swainsonine production occurs via a multibranched pathway and is dispensable for fungal colonization of plants and infection of insect hosts. The first step of swainsonine biosynthesis is the production of the precursor pipecolic acid (PA) via conversion of L-lysine (Lys) to 1-piperideine-6-carboxylate (P6C) by the aminotransferase swnA, the latter being further reduced to PA by the reductase swnR. PA can be converted from lysine by both the SW biosynthetic cluster and the unclustered genes such as lysine cyclodeaminase. The PKS-NRPS hybrid synthetase swnK uptakes and condensates PA and malonyl-CoA with and without skipping of the ketoreductase (KR) domain in order to produce 3 intermediates, 1-oxoindolizidine, (1S)-1-hydroxyindolizin, and (1R)-1-hydroxyindolizine; with the transisomer (1S)-1-hydroxyindolizin being predominant. The terminal thioester reductase (TE) domain of swnK is involved in reduction of the thioester bond to release the intermediate aldehydes. The oxidoreductase swnN could contribute to the reduction of 1-oxoindolizidine to (1S)-1-hydroxyindolizin and (1R)-1-hydroxyindolizine, contributing to the major route of SW production. The dioxygenase swnH2 would be responsible for the oxidization of (1R)-1-hydroxyindolizine into (1R,2S)-1,2-dihydroxyindolizine and of (1S)-1-hydroxyindolizin to yield both (1R,2S)-1,2-dihydroxyindolizine and (1S,2S)-1,2-dihydroxyindolizine. The dioxygenase swnH1 then performs the conversion of the 1,2-dihydroxyindolizine epimers to SW. This Metarhizium robertsii (strain ARSEF 23 / ATCC MYA-3075) (Metarhizium anisopliae (strain ARSEF 23)) protein is Oxidoreductase swnN.